The sequence spans 1301 residues: Zinc finger protein 532 (1301 aa).

Disordered regions lie at residues 26–206, 223–266, and 281–366; these read PKAA…RETE, AEDK…SSSK, and KAAS…IKTI. A compositionally biased stretch (basic and acidic residues) spans 32–52; that stretch reads SGHDDHESHMKQNAHGEDDSH. Polar residues predominate over residues 84-101; it reads PTGNGLHNGFLTASSLDS. The segment covering 102–111 has biased composition (basic and acidic residues); it reads YSKDGAKSLK. Positions 122–133 are enriched in polar residues; sequence KDSTFSQFSPIS. Phosphoserine occurs at positions 130, 133, and 134. Positions 136-151 are enriched in acidic residues; the sequence is EEFDDDEKIEVDDPPD. Residues 158-170 are compositionally biased toward polar residues; the sequence is SFRSNVLTGSAPQ. An N6-acetyllysine modification is found at K175. The segment covering 182-195 has biased composition (polar residues); the sequence is ENSSKTGLSTSGNV. Basic and acidic residues-rich tracts occupy residues 196–206 and 223–250; these read EKNKAVKRETE and AEDK…EKND. T205 bears the Phosphothreonine mark. Residues S252, S307, and S314 each carry the phosphoserine modification. The span at 303–315 shows a compositional bias: basic and acidic residues; that stretch reads EVNDSPRAADKSP. A compositionally biased stretch (low complexity) spans 337 to 359; the sequence is SISSENSSKGSPSSPAGSTPAIP. S434 carries the post-translational modification Phosphoserine. Glycyl lysine isopeptide (Lys-Gly) (interchain with G-Cter in SUMO2) cross-links involve residues K459 and K516. The C2H2-type 1; degenerate zinc finger occupies 616-635; sequence YKCLECGDSFALEKSLTQHY. The segment at 754-779 adopts a C2H2-type 2; degenerate zinc-finger fold; it reads LKCLECNEVFQDETSLATHFQQAADT. 5 C2H2-type zinc fingers span residues 783–805, 842–865, 870–893, 905–927, and 936–959; these read KTCT…QRIH, FRCV…QGSH, YKCP…YTQH, YKCS…FDQH, and FKCP…KSMH. Residue K980 forms a Glycyl lysine isopeptide (Lys-Gly) (interchain with G-Cter in SUMO2) linkage. The tract at residues 983–1017 is disordered; the sequence is TQNSANQNKEDTKSMNGKEKLEKKSPSPVKKSMET. The segment covering 990–1017 has biased composition (basic and acidic residues); it reads NKEDTKSMNGKEKLEKKSPSPVKKSMET. 2 consecutive C2H2-type zinc fingers follow at residues 1025–1048 and 1055–1078; these read WTCW…RKEH and HPCR…RIKH. The C2H2-type 10; degenerate zinc finger occupies 1085 to 1111; that stretch reads YACSHCPDSRRTFTKRLMLEKHVQLMH. S1140 is subject to Phosphoserine. Residues K1144 and K1167 each participate in a glycyl lysine isopeptide (Lys-Gly) (interchain with G-Cter in SUMO2) cross-link. The C2H2-type 11 zinc-finger motif lies at 1203–1226; the sequence is YQCRECGLCYTSHVSLSRHLFIVH. The tract at residues 1230–1263 is disordered; it reads EPQPVSKQNGAGEDNQQENKPSHEDESPDGAVSD. Residues 1264–1286 form a C2H2-type 12 zinc finger; the sequence is RKCKVCAKTFETEAALNTHMRTH.

This sequence belongs to the krueppel C2H2-type zinc-finger protein family.

The protein localises to the nucleus. In terms of biological role, may be involved in transcriptional regulation. In Homo sapiens (Human), this protein is Zinc finger protein 532 (ZNF532).